We begin with the raw amino-acid sequence, 519 residues long: Membrane-bound transcription factor site-2 protease (519 aa).

Residues 1–3 (MIP) are Cytoplasmic-facing. A helical transmembrane segment spans residues 4–24 (VSLVVVVVGGWTVVYLTDLVL). Topologically, residues 25–74 (KSSVYFKHSYEDWLENNGLSISPFHIRWQTAVFNRAFYSWGRRKARMLYQ) are lumenal. 2 consecutive transmembrane segments (helical) span residues 75-95 (WFNFGMVFGVIAMFSSFFLLG) and 96-107 (KTLMQTLAQMMA). At 108 to 144 (DSPSSYSSSSSSSSSSSSSSSSSSSSSSSLHNEQVLQ) the chain is on the lumenal side. The tract at residues 115 to 135 (SSSSSSSSSSSSSSSSSSSSS) is disordered. Residues 145–169 (VVVPGINLPVNQLTYFFTAVLISGV) form a helical membrane-spanning segment. His-171 contributes to the Zn(2+) binding site. The active site involves Glu-172. The next 3 membrane-spanning stretches (helical) occupy residues 174–186 (GHGIAAIREQVRF), 187–209 (NGFGIFLFIIYPGAFVDLFTTHL), and 229–251 (FVLALLGILALVLLPVILLPFYY). His-175 contributes to the Zn(2+) binding site. The Lumenal portion of the chain corresponds to 252–446 (TGVGVLITEV…LPVVVETFVK (195 aa)). The N-linked (GlcNAc...) asparagine glycan is linked to Asn-337. The next 2 membrane-spanning stretches (helical) occupy residues 447–464 (YLISLSGALAIVNAVPCF) and 465–476 (ALDGQWILNSFL). Residues 477–492 (DATLTSVIGDNDVKDL) lie on the Lumenal side of the membrane. Residues 493-513 (IGFFILLGGSVLLAANVTLGL) traverse the membrane as a helical segment. The Cytoplasmic segment spans residues 514–519 (WMVTAR).

The protein belongs to the peptidase M50A family. Zn(2+) is required as a cofactor. Expressed in heart, brain, placenta, lung, liver, muscle, kidney and pancreas.

The protein localises to the membrane. The protein resides in the cytoplasm. It localises to the golgi apparatus membrane. The catalysed reaction is Cleaves several transcription factors that are type-2 transmembrane proteins within membrane-spanning domains. Known substrates include sterol regulatory element-binding protein (SREBP) -1, SREBP-2 and forms of the transcriptional activator ATF6. SREBP-2 is cleaved at the site 477-DRSRILL-|-CVLTFLCLSFNPLTSLLQWGGA-505. The residues Asn-Pro, 11 residues distal to the site of cleavage in the membrane-spanning domain, are important for cleavage by S2P endopeptidase. Replacement of either of these residues does not prevent cleavage, but there is no cleavage if both of these residues are replaced.. Its function is as follows. Zinc metalloprotease that mediates intramembrane proteolysis of proteins such as ATF6, ATF6B, SREBF1/SREBP1 and SREBF2/SREBP2. Catalyzes the second step in the proteolytic activation of the sterol regulatory element-binding proteins (SREBPs) SREBF1/SREBP1 and SREBF2/SREBP2: cleaves SREBPs within the first transmembrane segment, thereby releasing the N-terminal segment with a portion of the transmembrane segment attached. Mature N-terminal SREBP fragments shuttle to the nucleus and activate gene transcription. Also mediates the second step in the proteolytic activation of the cyclic AMP-dependent transcription factor ATF-6 (ATF6 and ATF6B). Involved in intramembrane proteolysis during bone formation. In astrocytes and osteoblasts, upon DNA damage and ER stress, mediates the second step of the regulated intramembrane proteolytic activation of the transcription factor CREB3L1, leading to the inhibition of cell-cycle progression. The chain is Membrane-bound transcription factor site-2 protease from Homo sapiens (Human).